The sequence spans 452 residues: Adenylosuccinate synthetase (452 aa).

Residues 40 to 46 (GDEGKGK) and 68 to 70 (GHT) each bind GTP. D41 acts as the Proton acceptor in catalysis. Residues D41 and G68 each contribute to the Mg(2+) site. Residues 41-44 (DEGK), 66-69 (NAGH), T158, R172, N250, T265, and R329 each bind IMP. The Proton donor role is filled by H69. Substrate is bound at residue 325-331 (VTTKRKR). Residues R331, 357–359 (KLD), and 440–442 (GVG) contribute to the GTP site.

Belongs to the adenylosuccinate synthetase family. In terms of assembly, homodimer. Requires Mg(2+) as cofactor.

It localises to the cytoplasm. The catalysed reaction is IMP + L-aspartate + GTP = N(6)-(1,2-dicarboxyethyl)-AMP + GDP + phosphate + 2 H(+). It participates in purine metabolism; AMP biosynthesis via de novo pathway; AMP from IMP: step 1/2. Its function is as follows. Plays an important role in the de novo pathway and in the salvage pathway of purine nucleotide biosynthesis. Catalyzes the first committed step in the biosynthesis of AMP from IMP. This is Adenylosuccinate synthetase from Drosophila grimshawi (Hawaiian fruit fly).